A 232-amino-acid polypeptide reads, in one-letter code: 5'-methylthioadenosine/S-adenosylhomocysteine nucleosidase (232 aa).

Glu12 acts as the Proton acceptor in catalysis. Residues Gly78, Val153, and 174–175 contribute to the substrate site; that span reads ME. The active-site Proton donor is Asp198.

It belongs to the PNP/UDP phosphorylase family. MtnN subfamily.

The enzyme catalyses S-adenosyl-L-homocysteine + H2O = S-(5-deoxy-D-ribos-5-yl)-L-homocysteine + adenine. It catalyses the reaction S-methyl-5'-thioadenosine + H2O = 5-(methylsulfanyl)-D-ribose + adenine. It carries out the reaction 5'-deoxyadenosine + H2O = 5-deoxy-D-ribose + adenine. Its pathway is amino-acid biosynthesis; L-methionine biosynthesis via salvage pathway; S-methyl-5-thio-alpha-D-ribose 1-phosphate from S-methyl-5'-thioadenosine (hydrolase route): step 1/2. Catalyzes the irreversible cleavage of the glycosidic bond in both 5'-methylthioadenosine (MTA) and S-adenosylhomocysteine (SAH/AdoHcy) to adenine and the corresponding thioribose, 5'-methylthioribose and S-ribosylhomocysteine, respectively. Also cleaves 5'-deoxyadenosine, a toxic by-product of radical S-adenosylmethionine (SAM) enzymes, into 5-deoxyribose and adenine. This is 5'-methylthioadenosine/S-adenosylhomocysteine nucleosidase from Photobacterium profundum (strain SS9).